A 179-amino-acid polypeptide reads, in one-letter code: X-linked lymphocyte-regulated protein 5C (179 aa).

The segment covering 1–11 has biased composition (basic and acidic residues); it reads MSNKEQKDMKK. Residues 1–75 are disordered; sequence MSNKEQKDMK…MQDFKGDDGT (75 aa). A compositionally biased stretch (low complexity) spans 42 to 53; the sequence is GTSGMGSHSSGS. Positions 56-75 are enriched in basic and acidic residues; it reads QEAREPVQKKMQDFKGDDGT. The stretch at 146 to 175 forms a coiled coil; sequence ITQQQMKILQTAIEDHETKLKNAKDMCDTF.

It belongs to the XLR/SYCP3 family. Expressed in testis (at protein level). Also expressed in ovary. Not detected in other tissues tested.

The protein resides in the nucleus. It localises to the chromosome. In Mus musculus (Mouse), this protein is X-linked lymphocyte-regulated protein 5C.